Reading from the N-terminus, the 181-residue chain is ATP-dependent protease subunit HslV (181 aa).

Thr9 is a catalytic residue. Residues Gly164, Cys167, and Thr170 each contribute to the Na(+) site.

It belongs to the peptidase T1B family. HslV subfamily. As to quaternary structure, a double ring-shaped homohexamer of HslV is capped on each side by a ring-shaped HslU homohexamer. The assembly of the HslU/HslV complex is dependent on binding of ATP.

The protein resides in the cytoplasm. The catalysed reaction is ATP-dependent cleavage of peptide bonds with broad specificity.. Its activity is regulated as follows. Allosterically activated by HslU binding. Its function is as follows. Protease subunit of a proteasome-like degradation complex believed to be a general protein degrading machinery. This Gemmatimonas aurantiaca (strain DSM 14586 / JCM 11422 / NBRC 100505 / T-27) protein is ATP-dependent protease subunit HslV.